The sequence spans 249 residues: MTRYKAIISYDGHDFAGFQRQPHARSVQEEIEKTLTRINKGQPVVIHGAGRTDSGVHALGQVLHFDLPEERDGEKLRFALDTQTPEDIDFISVEQVSDDFHSRYNKHSKTYEFLVDIGRPKNPMMRHYATHYPYPLELSLLEEAITQLEGTHDFTGFTASGTSVEDKVRTITEAKVRYDAERNFLVFTFSGNGFLYKQIRNMVGTLLKIGNKRMPVEQIQRILAEKDRHLAGPTAGPNGLYLKEIRYEE.

The Nucleophile role is filled by D53. Y111 lines the substrate pocket.

This sequence belongs to the tRNA pseudouridine synthase TruA family. As to quaternary structure, homodimer.

The catalysed reaction is uridine(38/39/40) in tRNA = pseudouridine(38/39/40) in tRNA. In terms of biological role, formation of pseudouridine at positions 38, 39 and 40 in the anticodon stem and loop of transfer RNAs. The polypeptide is tRNA pseudouridine synthase A (Streptococcus gordonii (strain Challis / ATCC 35105 / BCRC 15272 / CH1 / DL1 / V288)).